A 112-amino-acid polypeptide reads, in one-letter code: MIVGRHIIAELYGVKEELIAKEEVVRSIVEEVVDKAELTKVGSVYKQFNPHGVTGIVLIAESHVSIHTWPEYGLVNLDIFTCGDTSKVEKAFKLFLEKFKPESYRHYVLDRG.

S62 serves as the catalytic Schiff-base intermediate with substrate; via pyruvic acid. The residue at position 62 (S62) is a Pyruvic acid (Ser); by autocatalysis. H67 (proton acceptor; for processing activity) is an active-site residue. C82 serves as the catalytic Proton donor; for catalytic activity.

Belongs to the prokaryotic AdoMetDC family. Type 1 subfamily. As to quaternary structure, heterotetramer of two alpha and two beta chains arranged as a dimer of alpha/beta heterodimers. Pyruvate serves as cofactor. Post-translationally, is synthesized initially as an inactive proenzyme. Formation of the active enzyme involves a self-maturation process in which the active site pyruvoyl group is generated from an internal serine residue via an autocatalytic post-translational modification. Two non-identical subunits are generated from the proenzyme in this reaction, and the pyruvate is formed at the N-terminus of the alpha chain, which is derived from the carboxyl end of the proenzyme. The post-translation cleavage follows an unusual pathway, termed non-hydrolytic serinolysis, in which the side chain hydroxyl group of the serine supplies its oxygen atom to form the C-terminus of the beta chain, while the remainder of the serine residue undergoes an oxidative deamination to produce ammonia and the pyruvoyl group blocking the N-terminus of the alpha chain.

The catalysed reaction is S-adenosyl-L-methionine + H(+) = S-adenosyl 3-(methylsulfanyl)propylamine + CO2. It functions in the pathway amine and polyamine biosynthesis; S-adenosylmethioninamine biosynthesis; S-adenosylmethioninamine from S-adenosyl-L-methionine: step 1/1. Catalyzes the decarboxylation of S-adenosylmethionine to S-adenosylmethioninamine (dcAdoMet), the propylamine donor required for the synthesis of the polyamines spermine and spermidine from the diamine putrescine. The protein is S-adenosylmethionine decarboxylase proenzyme of Archaeoglobus fulgidus (strain ATCC 49558 / DSM 4304 / JCM 9628 / NBRC 100126 / VC-16).